The primary structure comprises 252 residues: MERVLIVNADDFGLSKGQNYGIVEAYRNGVVTSTTALVNGEAIDHAAQLSRELPALGVGMHFVLTLGKPVSEMPGLTRDGLLGKWIWQMAEEDTLPLDEIAHELACQYQRFIDVFGREPTHLDSHHHVHMFPQIFPIVALFAAQRGIALRIDRQTVLNADDLPSDLRSTQGFSSEFYGEEITEACFLRILDASAHRGEASLEVMCHPAFVDNIIRQSAYCYPRLTELEVLTSASLKAAIAERGYRPGSFLDI.

H61 and H125 together coordinate Mg(2+).

The protein belongs to the YdjC deacetylase family. ChbG subfamily. In terms of assembly, homodimer. The cofactor is Mg(2+).

The protein resides in the cytoplasm. The catalysed reaction is N,N'-diacetylchitobiose + H2O = N-acetyl-beta-D-glucosaminyl-(1-&gt;4)-D-glucosamine + acetate. The enzyme catalyses diacetylchitobiose-6'-phosphate + H2O = N'-monoacetylchitobiose-6'-phosphate + acetate. It functions in the pathway glycan degradation; chitin degradation. Functionally, involved in the degradation of chitin. ChbG is essential for growth on the acetylated chitooligosaccharides chitobiose and chitotriose but is dispensable for growth on cellobiose and chitosan dimer, the deacetylated form of chitobiose. Deacetylation of chitobiose-6-P and chitotriose-6-P is necessary for both the activation of the chb promoter by the regulatory protein ChbR and the hydrolysis of phosphorylated beta-glucosides by the phospho-beta-glucosidase ChbF. Catalyzes the removal of only one acetyl group from chitobiose-6-P to yield monoacetylchitobiose-6-P, the inducer of ChbR and the substrate of ChbF. The sequence is that of Chitooligosaccharide deacetylase from Salmonella heidelberg (strain SL476).